The chain runs to 238 residues: ATP synthase subunit a (238 aa).

5 consecutive transmembrane segments (helical) span residues 18–38 (LTLLAVCIVTIAVIFAFVFWA), 76–96 (YSLLLFTIFLFVAVANNLGLF), 114–134 (NLAFDLALSLFITLMVHIEGV), 166–186 (SLAIRLFGNIFAGEVVTGLIV), and 193–213 (VYWWPIAFLVNMAWTAFSVFI).

It belongs to the ATPase A chain family. As to quaternary structure, F-type ATPases have 2 components, CF(1) - the catalytic core - and CF(0) - the membrane proton channel. CF(1) has five subunits: alpha(3), beta(3), gamma(1), delta(1), epsilon(1). CF(0) has three main subunits: a(1), b(2) and c(9-12). The alpha and beta chains form an alternating ring which encloses part of the gamma chain. CF(1) is attached to CF(0) by a central stalk formed by the gamma and epsilon chains, while a peripheral stalk is formed by the delta and b chains.

The protein localises to the cell membrane. Functionally, key component of the proton channel; it plays a direct role in the translocation of protons across the membrane. This Streptococcus pyogenes serotype M5 (strain Manfredo) protein is ATP synthase subunit a.